The sequence spans 489 residues: GTPase Der (489 aa).

2 EngA-type G domains span residues 3–166 (PVIA…PKDE) and 195–368 (IKIA…KSAV). GTP contacts are provided by residues 9–16 (GRPNVGKS), 56–60 (DTGGI), 118–121 (NKID), 201–208 (GRPNVGKS), 248–252 (DTAGV), and 313–316 (NKWD). A KH-like domain is found at 369–453 (TRWPTSRLTQ…PIRIEFKGGE (85 aa)). Positions 451–489 (GGENPYEGNKNTLTDRQVNKKRRMMSHHKKADKKRRDKR) are disordered. The segment covering 469 to 489 (NKKRRMMSHHKKADKKRRDKR) has biased composition (basic residues).

It belongs to the TRAFAC class TrmE-Era-EngA-EngB-Septin-like GTPase superfamily. EngA (Der) GTPase family. In terms of assembly, associates with the 50S ribosomal subunit.

Functionally, GTPase that plays an essential role in the late steps of ribosome biogenesis. The polypeptide is GTPase Der (Pseudomonas syringae pv. tomato (strain ATCC BAA-871 / DC3000)).